The sequence spans 314 residues: Methionyl-tRNA formyltransferase (314 aa).

A (6S)-5,6,7,8-tetrahydrofolate-binding site is contributed by 113–116; it reads SLLP.

The protein belongs to the Fmt family.

The catalysed reaction is L-methionyl-tRNA(fMet) + (6R)-10-formyltetrahydrofolate = N-formyl-L-methionyl-tRNA(fMet) + (6S)-5,6,7,8-tetrahydrofolate + H(+). In terms of biological role, attaches a formyl group to the free amino group of methionyl-tRNA(fMet). The formyl group appears to play a dual role in the initiator identity of N-formylmethionyl-tRNA by promoting its recognition by IF2 and preventing the misappropriation of this tRNA by the elongation apparatus. This Pseudomonas syringae pv. syringae (strain B728a) protein is Methionyl-tRNA formyltransferase.